The following is a 502-amino-acid chain: Probable glycine dehydrogenase (decarboxylating) subunit 2 (502 aa).

K273 carries the post-translational modification N6-(pyridoxal phosphate)lysine.

This sequence belongs to the GcvP family. C-terminal subunit subfamily. As to quaternary structure, the glycine cleavage system is composed of four proteins: P, T, L and H. In this organism, the P 'protein' is a heterodimer of two subunits. Requires pyridoxal 5'-phosphate as cofactor.

The enzyme catalyses N(6)-[(R)-lipoyl]-L-lysyl-[glycine-cleavage complex H protein] + glycine + H(+) = N(6)-[(R)-S(8)-aminomethyldihydrolipoyl]-L-lysyl-[glycine-cleavage complex H protein] + CO2. Its function is as follows. The glycine cleavage system catalyzes the degradation of glycine. The P protein binds the alpha-amino group of glycine through its pyridoxal phosphate cofactor; CO(2) is released and the remaining methylamine moiety is then transferred to the lipoamide cofactor of the H protein. In Thermococcus gammatolerans (strain DSM 15229 / JCM 11827 / EJ3), this protein is Probable glycine dehydrogenase (decarboxylating) subunit 2.